Reading from the N-terminus, the 134-residue chain is Transcription antitermination protein NusB (134 aa).

It belongs to the NusB family.

In terms of biological role, involved in transcription antitermination. Required for transcription of ribosomal RNA (rRNA) genes. Binds specifically to the boxA antiterminator sequence of the ribosomal RNA (rrn) operons. The chain is Transcription antitermination protein NusB from Shewanella woodyi (strain ATCC 51908 / MS32).